The sequence spans 53 residues: UPF0391 membrane protein BPSS2216 (53 aa).

Helical transmembrane passes span 5 to 25 and 30 to 50; these read ALVF…GIAA and IAKI…VLGV.

Belongs to the UPF0391 family.

Its subcellular location is the cell membrane. The protein is UPF0391 membrane protein BPSS2216 of Burkholderia pseudomallei (strain K96243).